A 420-amino-acid polypeptide reads, in one-letter code: UDP-N-acetylmuramoylalanine--D-glutamate ligase (420 aa).

109 to 115 contacts ATP; it reads GSVGKST.

It belongs to the MurCDEF family.

The protein localises to the cytoplasm. The enzyme catalyses UDP-N-acetyl-alpha-D-muramoyl-L-alanine + D-glutamate + ATP = UDP-N-acetyl-alpha-D-muramoyl-L-alanyl-D-glutamate + ADP + phosphate + H(+). Its pathway is cell wall biogenesis; peptidoglycan biosynthesis. Its function is as follows. Cell wall formation. Catalyzes the addition of glutamate to the nucleotide precursor UDP-N-acetylmuramoyl-L-alanine (UMA). The chain is UDP-N-acetylmuramoylalanine--D-glutamate ligase from Fervidobacterium nodosum (strain ATCC 35602 / DSM 5306 / Rt17-B1).